The following is a 529-amino-acid chain: Bifunctional purine biosynthesis protein PurH (529 aa).

Positions 8 to 158 (PSAPDLVAPK…KNHGYVAVCT (151 aa)) constitute an MGS-like domain.

It belongs to the PurH family.

It carries out the reaction (6R)-10-formyltetrahydrofolate + 5-amino-1-(5-phospho-beta-D-ribosyl)imidazole-4-carboxamide = 5-formamido-1-(5-phospho-D-ribosyl)imidazole-4-carboxamide + (6S)-5,6,7,8-tetrahydrofolate. The catalysed reaction is IMP + H2O = 5-formamido-1-(5-phospho-D-ribosyl)imidazole-4-carboxamide. It participates in purine metabolism; IMP biosynthesis via de novo pathway; 5-formamido-1-(5-phospho-D-ribosyl)imidazole-4-carboxamide from 5-amino-1-(5-phospho-D-ribosyl)imidazole-4-carboxamide (10-formyl THF route): step 1/1. Its pathway is purine metabolism; IMP biosynthesis via de novo pathway; IMP from 5-formamido-1-(5-phospho-D-ribosyl)imidazole-4-carboxamide: step 1/1. The polypeptide is Bifunctional purine biosynthesis protein PurH (Caulobacter vibrioides (strain ATCC 19089 / CIP 103742 / CB 15) (Caulobacter crescentus)).